The primary structure comprises 74 residues: Sec-independent protein translocase protein TatA (74 aa).

Residues 1 to 21 form a helical membrane-spanning segment; it reads MGGISIWNLVIIVLLVVLLFG. Residues 51 to 74 form a disordered region; it reads AEFEKVEQKTAESTEQKAKEKEQA.

The protein belongs to the TatA/E family. In terms of assembly, the Tat system comprises two distinct complexes: a TatABC complex, containing multiple copies of TatA, TatB and TatC subunits, and a separate TatA complex, containing only TatA subunits. Substrates initially bind to the TatABC complex, which probably triggers association of the separate TatA complex to form the active translocon.

It is found in the cell inner membrane. Its function is as follows. Part of the twin-arginine translocation (Tat) system that transports large folded proteins containing a characteristic twin-arginine motif in their signal peptide across membranes. TatA could form the protein-conducting channel of the Tat system. This chain is Sec-independent protein translocase protein TatA, found in Glaesserella parasuis serovar 5 (strain SH0165) (Haemophilus parasuis).